The following is a 624-amino-acid chain: Laccase-1 (624 aa).

The first 20 residues, 1 to 20, serve as a signal peptide directing secretion; the sequence is MRGVVKLFFLSCSLVSLVSS. 2 Plastocyanin-like domains span residues 69–183 and 195–355; these read TKAL…HSPN and DRIV…VVRY. Residues His-117, His-119, His-162, and His-164 each contribute to the Cu cation site. Cys-138 and Cys-578 form a disulfide bridge. 3 N-linked (GlcNAc...) asparagine glycosylation sites follow: Asn-242, Asn-320, and Asn-430. Positions 469-562 constitute a Plastocyanin-like 3 domain; the sequence is IIINNLDGVI…GKLAVVVIQP (94 aa). Positions 480, 483, and 485 each coordinate Cu cation. N-linked (GlcNAc...) asparagine glycosylation occurs at Asn-503. His-543, Cys-544, His-545, and His-549 together coordinate Cu cation. Positions 582–603 are disordered; that stretch reads DPNAFGPARRSPSPSIQSSKTS. Low complexity predominate over residues 592-603; that stretch reads SPSPSIQSSKTS.

Belongs to the multicopper oxidase family. Cu cation is required as a cofactor.

It localises to the secreted. The protein localises to the cell wall. The enzyme catalyses 4 hydroquinone + O2 = 4 benzosemiquinone + 2 H2O. Laccase that catalyzes the oxidation of certain aromatic compounds, including L-dopa, to quinones, which then polymerize to melanin. Able to oxidize a wide variety of aromatic diphenol and diamino groups in the ortho, meta, and para positions but not monophenolic groups such as in phenol, tyramine, or tyrosine. Plays an important role in virulence. Plays a role in dissemination to extrapulmonary sites but is not involved in pulmonary growth or in elicitation of cellular immune responses in the lung. This Cryptococcus neoformans var. grubii serotype A (strain H99 / ATCC 208821 / CBS 10515 / FGSC 9487) (Filobasidiella neoformans var. grubii) protein is Laccase-1 (LAC1).